Reading from the N-terminus, the 127-residue chain is Small ribosomal subunit protein uS12 (127 aa).

Asp89 carries the 3-methylthioaspartic acid modification. Residues Leu102 to Lys127 form a disordered region. Basic residues predominate over residues Gly113–Lys127.

It belongs to the universal ribosomal protein uS12 family. In terms of assembly, part of the 30S ribosomal subunit. Contacts proteins S8 and S17. May interact with IF1 in the 30S initiation complex.

In terms of biological role, with S4 and S5 plays an important role in translational accuracy. Functionally, interacts with and stabilizes bases of the 16S rRNA that are involved in tRNA selection in the A site and with the mRNA backbone. Located at the interface of the 30S and 50S subunits, it traverses the body of the 30S subunit contacting proteins on the other side and probably holding the rRNA structure together. The combined cluster of proteins S8, S12 and S17 appears to hold together the shoulder and platform of the 30S subunit. In Nostoc punctiforme (strain ATCC 29133 / PCC 73102), this protein is Small ribosomal subunit protein uS12.